The chain runs to 268 residues: ELL-associated factor 1 (268 aa).

The segment at 106–268 (IQVKKTRAEG…LSESGSDSDD (163 aa)) is disordered. Pro residues predominate over residues 128–154 (TRPPQTSQPPPPPPPMPFRAPTKPPVG). Ser-165 carries the post-translational modification Phosphoserine. Basic and acidic residues predominate over residues 171–181 (DDIKRELRAEV). The necessary for transactivation activity stretch occupies residues 182–262 (DIIEQMSSSS…LRNDLQLSES (81 aa)). Residues 188–213 (SSSSGSSSSDSESSSGSDDDSSSSGG) show a composition bias toward low complexity. Residues 238-268 (NGTSRPQGSNQLMNTLRNDLQLSESGSDSDD) are compositionally biased toward polar residues.

It belongs to the EAF family. As to quaternary structure, component of the super elongation complex (SEC), at least composed of EAF1, EAF2, CDK9, MLLT3/AF9, AFF (AFF1 or AFF4), the P-TEFb complex and ELL (ELL, ELL2 or ELL3). Interacts with ELL and ELL2. In terms of tissue distribution, strongly expressed in heart, brain, placenta, lung, liver, skeletal muscle, kidney, pancreas, spleen, prostate, testis, small intestine and colon. Poorly expressed in thymus.

The protein resides in the nucleus speckle. The protein localises to the nucleus. It is found in the cajal body. Its function is as follows. Acts as a transcriptional transactivator of ELL and ELL2 elongation activities. The sequence is that of ELL-associated factor 1 (EAF1) from Homo sapiens (Human).